The sequence spans 523 residues: La-related protein 1C (523 aa).

A compositionally biased stretch (low complexity) spans 1–16 (MASATSNNPASSSMSP). Disordered regions lie at residues 1–52 (MASA…VRGE) and 95–313 (AAGD…VRHP). Residue alanine 2 is modified to N-acetylalanine. Residues 22–31 (NHGSPTASVA) show a composition bias toward polar residues. Composition is skewed to low complexity over residues 32 to 44 (QSPR…VSSP) and 146 to 169 (SNKS…ASSS). Residue serine 33 is modified to Phosphoserine. 2 stretches are compositionally biased toward polar residues: residues 206–270 (QRNG…NGNH) and 282–305 (HGNQ…SQRG). Residues 363–452 (HYQDPPLHMK…RDNWQNWVLR (90 aa)) form the HTH La-type RNA-binding domain. The interval 474 to 523 (GNLSVDQSSADPIGGSSSQLQPTEALSDDQQQSSSTAPVSNHNAPDGANR) is disordered. The segment covering 477 to 516 (SVDQSSADPIGGSSSQLQPTEALSDDQQQSSSTAPVSNHN) has biased composition (polar residues).

It belongs to the LARP family. In terms of tissue distribution, age-dependent accumulation in rosette leaves.

It localises to the cytoplasm. Its function is as follows. Promotes leaf senescence mediated by abscisic acid (ABA), salicylic acid (SA) and jasmonic acid (MeJA), probably though the induction of expression of senescence-associated genes (SAGs) and defense-related genes. This Arabidopsis thaliana (Mouse-ear cress) protein is La-related protein 1C (LARP1C).